The following is a 237-amino-acid chain: 1-(5-phosphoribosyl)-5-[(5-phosphoribosylamino)methylideneamino] imidazole-4-carboxamide isomerase (237 aa).

The active-site Proton acceptor is Asp-8. Asp-129 acts as the Proton donor in catalysis.

Belongs to the HisA/HisF family.

The protein localises to the cytoplasm. It carries out the reaction 1-(5-phospho-beta-D-ribosyl)-5-[(5-phospho-beta-D-ribosylamino)methylideneamino]imidazole-4-carboxamide = 5-[(5-phospho-1-deoxy-D-ribulos-1-ylimino)methylamino]-1-(5-phospho-beta-D-ribosyl)imidazole-4-carboxamide. The protein operates within amino-acid biosynthesis; L-histidine biosynthesis; L-histidine from 5-phospho-alpha-D-ribose 1-diphosphate: step 4/9. The protein is 1-(5-phosphoribosyl)-5-[(5-phosphoribosylamino)methylideneamino] imidazole-4-carboxamide isomerase of Methanosphaera stadtmanae (strain ATCC 43021 / DSM 3091 / JCM 11832 / MCB-3).